The following is a 326-amino-acid chain: Alkanal monooxygenase beta chain (326 aa).

The protein belongs to the bacterial luciferase oxidoreductase family. As to quaternary structure, heterodimer of an alpha and a beta chain.

It carries out the reaction a long-chain fatty aldehyde + FMNH2 + O2 = a long-chain fatty acid + hnu + FMN + H2O + 2 H(+). Its function is as follows. Light-emitting reaction in luminous bacteria. The specific role of the beta subunit is unknown, but it is absolutely required for bioluminescence activity. The polypeptide is Alkanal monooxygenase beta chain (luxB) (Aliivibrio fischeri (Vibrio fischeri)).